The chain runs to 315 residues: Nucleotide-binding protein CGSHiEE_06315 (315 aa).

Residue 8–15 (GRSGAGKS) coordinates ATP. GTP is bound at residue 56–59 (DIRN).

The protein belongs to the RapZ-like family.

Its function is as follows. Displays ATPase and GTPase activities. This is Nucleotide-binding protein CGSHiEE_06315 from Haemophilus influenzae (strain PittEE).